Reading from the N-terminus, the 223-residue chain is UPF0441 protein YgiB (223 aa).

Residues T178–T195 are compositionally biased toward low complexity. Residues T178–G223 are disordered. A compositionally biased stretch (polar residues) spans A204–G223.

It belongs to the UPF0441 family.

The sequence is that of UPF0441 protein YgiB from Shigella boydii serotype 18 (strain CDC 3083-94 / BS512).